Here is a 205-residue protein sequence, read N- to C-terminus: MLKLKFNEEGLIPVIAQDYRTGEVRMLAYANEEAIKKTLETGYAHYYSRSRKKIWKKGETSGELQKVIEVRVDCDEDALIYVIEQEKDRACHTGERNCFFRDIEGNKVEKPLPFEVLPRLQDVIREKIERKEENSYTAKLVSQGKERVFQKFGEEAVETLIALMKGEKEEVIYESADMLYTFLVSLSVSGIDIKEVMEELIRRFK.

The tract at residues 1-116 is phosphoribosyl-AMP cyclohydrolase; sequence MLKLKFNEEG…KVEKPLPFEV (116 aa). The segment at 117 to 205 is phosphoribosyl-ATP pyrophosphohydrolase; the sequence is LPRLQDVIRE…VMEELIRRFK (89 aa).

In the N-terminal section; belongs to the PRA-CH family. It in the C-terminal section; belongs to the PRA-PH family.

The protein localises to the cytoplasm. The catalysed reaction is 1-(5-phospho-beta-D-ribosyl)-ATP + H2O = 1-(5-phospho-beta-D-ribosyl)-5'-AMP + diphosphate + H(+). It catalyses the reaction 1-(5-phospho-beta-D-ribosyl)-5'-AMP + H2O = 1-(5-phospho-beta-D-ribosyl)-5-[(5-phospho-beta-D-ribosylamino)methylideneamino]imidazole-4-carboxamide. Its pathway is amino-acid biosynthesis; L-histidine biosynthesis; L-histidine from 5-phospho-alpha-D-ribose 1-diphosphate: step 2/9. It functions in the pathway amino-acid biosynthesis; L-histidine biosynthesis; L-histidine from 5-phospho-alpha-D-ribose 1-diphosphate: step 3/9. The polypeptide is Histidine biosynthesis bifunctional protein HisIE (hisI) (Aquifex aeolicus (strain VF5)).